Consider the following 462-residue polypeptide: Glycine--tRNA ligase (462 aa).

Residues Arg100 and Glu170 each coordinate substrate. Residues 202 to 204 (RNE), 212 to 217 (FRTREF), 287 to 288 (EL), and 331 to 334 (GVER) contribute to the ATP site. 217–221 (FEQME) is a substrate binding site. 327–331 (EPSVG) serves as a coordination point for substrate.

It belongs to the class-II aminoacyl-tRNA synthetase family. In terms of assembly, homodimer.

It localises to the cytoplasm. It carries out the reaction tRNA(Gly) + glycine + ATP = glycyl-tRNA(Gly) + AMP + diphosphate. In terms of biological role, catalyzes the attachment of glycine to tRNA(Gly). The chain is Glycine--tRNA ligase from Malacoplasma penetrans (strain HF-2) (Mycoplasma penetrans).